The following is a 480-amino-acid chain: Probable cyclodipeptide synthase PUL1 (480 aa).

The protein operates within siderophore biosynthesis. Its function is as follows. Probable cyclodipeptide synthase; part of the PUL gene cluster that mediates the formation of pulcherrimin, a red iron-containing pigment composed of two cyclized and modified leucine molecules that acts as a siderophore, a chelator that binds iron outside the cell for subsequent uptake. Two leucine molecules are cyclized via a cyclodipeptide synthase, and the resulting diketopiperazine is oxidized by a cytochrome P450 monooxygenase to generate pulcherriminic acid (PA), which can then spontaneously bind iron to form pulcherrimin. The probable cyclodipeptide synthase PUL1 and the cytochrome P450 monooxygenase PUL2 encode the enzymes responsible for the two-step pulcherrimin biosynthesis pathway. The chain is Probable cyclodipeptide synthase PUL1 from Kluyveromyces lactis (strain ATCC 8585 / CBS 2359 / DSM 70799 / NBRC 1267 / NRRL Y-1140 / WM37) (Yeast).